Reading from the N-terminus, the 303-residue chain is MEKNHSSGEWEKMKNEINELMIEGRDYAHQFGSASSQETREHLAKKILQSYHKSLTIMNYSGELDQVSQGGGSPKSDDSDQEPLVIKSSKKSMPRWSSKVRIAPGAGVDRTLDDGFSWRKYGQKDILGAKFPRGYYRCTYRKSQGCEATKQVQRSDENQMLLEISYRGIHSCSQAANVGTTMPIQNLEPNQTQEHGNLDMVKESVDNYNHQAHLHHNLHYPLSSTPNLENNNAYMLQMRDQNIEYFGSTSFSSDLGTSINYNFPASGSASHSASNSPSTVPLESPFESYDPNHPYGGFGGFYS.

Residues 65-92 form a disordered region; that stretch reads DQVSQGGGSPKSDDSDQEPLVIKSSKKS. The segment at residues 107-175 is a DNA-binding region (WRKY); that stretch reads GVDRTLDDGF…YRGIHSCSQA (69 aa). Residues 266–278 show a composition bias toward low complexity; that stretch reads SGSASHSASNSPS. The disordered stretch occupies residues 266–291; sequence SGSASHSASNSPSTVPLESPFESYDP.

It belongs to the WRKY group III family. As to quaternary structure, interacts with WRKY53, WRKY54 and WRKY70.

The protein localises to the nucleus. Functionally, transcription factor. Interacts specifically with the W box (5'-(T)TGAC[CT]-3'), a frequently occurring elicitor-responsive cis-acting element. This chain is Probable WRKY transcription factor 30, found in Arabidopsis thaliana (Mouse-ear cress).